The following is a 495-amino-acid chain: Probable cytosol aminopeptidase (495 aa).

Mn(2+) is bound by residues lysine 266 and aspartate 271. The active site involves lysine 278. Aspartate 289, aspartate 348, and glutamate 350 together coordinate Mn(2+). Arginine 352 is a catalytic residue.

The protein belongs to the peptidase M17 family. The cofactor is Mn(2+).

Its subcellular location is the cytoplasm. The enzyme catalyses Release of an N-terminal amino acid, Xaa-|-Yaa-, in which Xaa is preferably Leu, but may be other amino acids including Pro although not Arg or Lys, and Yaa may be Pro. Amino acid amides and methyl esters are also readily hydrolyzed, but rates on arylamides are exceedingly low.. It catalyses the reaction Release of an N-terminal amino acid, preferentially leucine, but not glutamic or aspartic acids.. Functionally, presumably involved in the processing and regular turnover of intracellular proteins. Catalyzes the removal of unsubstituted N-terminal amino acids from various peptides. The chain is Probable cytosol aminopeptidase from Pseudomonas aeruginosa (strain UCBPP-PA14).